Here is a 156-residue protein sequence, read N- to C-terminus: MKIVSTLLGELEFEEEDIIMFPAGIPAFEQEKSFLLIAMGEGVPFYYLQSALNPELCLVVANPFAFFPRYSIEIGQEELQRLDCSQREELLLYVILTVPQDFRESTANLVAPLIINQESKKGLQFIATNSDYTTRHPIFQPTQAEEQTGIAAAEEG.

It belongs to the FliW family. Interacts with translational regulator CsrA and flagellin(s).

It is found in the cytoplasm. Functionally, acts as an anti-CsrA protein, binds CsrA and prevents it from repressing translation of its target genes, one of which is flagellin. Binds to flagellin and participates in the assembly of the flagellum. The sequence is that of Flagellar assembly factor FliW from Syntrophomonas wolfei subsp. wolfei (strain DSM 2245B / Goettingen).